Reading from the N-terminus, the 299-residue chain is UDP-N-acetylenolpyruvoylglucosamine reductase (299 aa).

The 166-residue stretch at 27 to 192 folds into the FAD-binding PCMH-type domain; the sequence is KSGGAADWLF…VGATFRGRPG (166 aa). The active site involves arginine 172. Residues 206-225 are disordered; the sequence is ASREASQPLRSRTGGSTFKN. Residues 208–224 show a composition bias toward polar residues; that stretch reads REASQPLRSRTGGSTFK. Residue serine 221 is the Proton donor of the active site. Glutamate 291 is an active-site residue.

Belongs to the MurB family. Requires FAD as cofactor.

It localises to the cytoplasm. The enzyme catalyses UDP-N-acetyl-alpha-D-muramate + NADP(+) = UDP-N-acetyl-3-O-(1-carboxyvinyl)-alpha-D-glucosamine + NADPH + H(+). Its pathway is cell wall biogenesis; peptidoglycan biosynthesis. Cell wall formation. The chain is UDP-N-acetylenolpyruvoylglucosamine reductase from Sphingopyxis alaskensis (strain DSM 13593 / LMG 18877 / RB2256) (Sphingomonas alaskensis).